We begin with the raw amino-acid sequence, 435 residues long: MKPVNIGLLGLGTVGGGAAAVLRDNAEEISRRLGREIRISAMCDLSEEKARQICPSAAFVKDPFELVARKDVDVVVELFGGTGIAKEAVLKAIENGKHIVTANKKLLAEYGNEIFPLAEKQNVIVQFEAAVAGGIPIIKALREGLAANRIKSIAGIINGTSNFILSEMREKGSAFADVLKEAQALGYAEADPTFDIEGNDAGHKITIMSALAFGTPMNFSACYLEGISKLDSRDIKYAEELGYRIKLLGVTRKTGKGIELRVHPTLIPESRLLANVDGVMNAVRVNADMVGETLYYGAGAGALPTASAVVADIIDIARLVEADTAHRVPHLAFQPAQVQAQTILPMDEITSSYYLRVQAKDEPGTLGQIAALLAQENVSIEALIQKGVIDQTTAEIVILTHSTVEKHIKSAIAAIEALDCVEKPITMIRMESLHD.

NADPH-binding residues include Thr13, Val14, and Lys104. Val14 is an NAD(+) binding site. NADP(+) contacts are provided by Val14 and Lys104. Na(+) contacts are provided by Glu128, Val131, Gly133, and Ile135. NADP(+) is bound by residues Gly186 and Glu189. Residues Glu189 and Asp200 each contribute to the L-homoserine site. Lys204 (proton donor) is an active-site residue. Gly301 is a binding site for NADPH. NAD(+) is bound at residue Gly301. Gly301 serves as a coordination point for NADP(+). An ACT domain is found at 354 to 429 (YLRVQAKDEP…CVEKPITMIR (76 aa)).

Belongs to the homoserine dehydrogenase family. Homotetramer. It depends on a metal cation as a cofactor.

The enzyme catalyses L-homoserine + NAD(+) = L-aspartate 4-semialdehyde + NADH + H(+). The protein operates within amino-acid biosynthesis; L-methionine biosynthesis via de novo pathway; L-homoserine from L-aspartate: step 3/3. It functions in the pathway amino-acid biosynthesis; L-threonine biosynthesis; L-threonine from L-aspartate: step 3/5. Neither NaCl nor KCl increase the activity. L-threonine and L-serine do not markedly inhibit the oxidation activity. Catalyzes the conversion of L-aspartate-beta-semialdehyde (L-Asa) to L-homoserine (L-Hse), the third step in the biosynthesis of threonine and methionine from aspartate. Is highly specific for NAD(+), and displays an approximate 479-fold (kcat/Km) preference for NAD(+) over NADP(+). This Neisseria gonorrhoeae (strain ATCC 700825 / FA 1090) protein is Homoserine dehydrogenase.